A 331-amino-acid polypeptide reads, in one-letter code: DNA-directed RNA polymerase subunit alpha (331 aa).

The interval 1-242 (MEKFLRYNIQ…EHYKPIVTEL (242 aa)) is alpha N-terminal domain (alpha-NTD). The interval 258–331 (VSSSKSSLAI…RNLKLKEEQN (74 aa)) is alpha C-terminal domain (alpha-CTD).

It belongs to the RNA polymerase alpha chain family. Homodimer. The RNAP catalytic core consists of 2 alpha, 1 beta, 1 beta' and 1 omega subunit. When a sigma factor is associated with the core the holoenzyme is formed, which can initiate transcription.

The enzyme catalyses RNA(n) + a ribonucleoside 5'-triphosphate = RNA(n+1) + diphosphate. Functionally, DNA-dependent RNA polymerase catalyzes the transcription of DNA into RNA using the four ribonucleoside triphosphates as substrates. The sequence is that of DNA-directed RNA polymerase subunit alpha from Malacoplasma penetrans (strain HF-2) (Mycoplasma penetrans).